Reading from the N-terminus, the 566-residue chain is Arginine--tRNA ligase (566 aa).

The 'HIGH' region signature appears at 120-130 (PNIAKPFHVGH).

It belongs to the class-I aminoacyl-tRNA synthetase family. As to quaternary structure, monomer.

It is found in the cytoplasm. It catalyses the reaction tRNA(Arg) + L-arginine + ATP = L-arginyl-tRNA(Arg) + AMP + diphosphate. This Clostridium kluyveri (strain NBRC 12016) protein is Arginine--tRNA ligase.